A 220-amino-acid polypeptide reads, in one-letter code: Glutathione S-transferase U26 (220 aa).

The GST N-terminal domain maps to 4–83 (DQVILLDYWP…YIDEVWSDAS (80 aa)). Residues 14–15 (SM), 40–41 (VK), 54–55 (KI), and 67–68 (ES) contribute to the glutathione site. Residues 89–210 (DPYQKSRARF…ADSDRIIEYV (122 aa)) form the GST C-terminal domain.

The protein belongs to the GST superfamily. Tau family.

Its subcellular location is the cytoplasm. It is found in the cytosol. It catalyses the reaction RX + glutathione = an S-substituted glutathione + a halide anion + H(+). Functionally, in vitro, possesses glutathione S-transferase activity toward 1-chloro-2,4-dinitrobenzene (CDNB). May be involved in the conjugation of reduced glutathione to a wide number of exogenous and endogenous hydrophobic electrophiles and have a detoxification role against certain herbicides. The sequence is that of Glutathione S-transferase U26 (GSTU26) from Arabidopsis thaliana (Mouse-ear cress).